A 31-amino-acid polypeptide reads, in one-letter code: Cliotide T10 (31 aa).

Positions 1–31 form a cross-link, cyclopeptide (Gly-Asn); that stretch reads GIPCGESCVYIPCTVTALLGCSCKDKVCYKN. Disulfide bonds link Cys4–Cys21, Cys8–Cys23, and Cys13–Cys28.

Contains 3 disulfide bonds. Post-translationally, this is a cyclic peptide. In terms of tissue distribution, expressed in seed, root and nodule but not in flower, stem, shoot, leaf and pod (at protein level).

Functionally, probably participates in a plant defense mechanism. The sequence is that of Cliotide T10 from Clitoria ternatea (Butterfly pea).